Consider the following 392-residue polypeptide: tRNA-specific 2-thiouridylase MnmA (392 aa).

ATP-binding positions include 18–25 (AMSGGVDS) and L44. C112 acts as the Nucleophile in catalysis. C112 and C208 are oxidised to a cystine. G136 lines the ATP pocket. An interaction with tRNA region spans residues 158–160 (RDQ). Residue C208 is the Cysteine persulfide intermediate of the active site.

This sequence belongs to the MnmA/TRMU family.

It is found in the cytoplasm. The enzyme catalyses S-sulfanyl-L-cysteinyl-[protein] + uridine(34) in tRNA + AH2 + ATP = 2-thiouridine(34) in tRNA + L-cysteinyl-[protein] + A + AMP + diphosphate + H(+). Functionally, catalyzes the 2-thiolation of uridine at the wobble position (U34) of tRNA, leading to the formation of s(2)U34. In Rhodospirillum centenum (strain ATCC 51521 / SW), this protein is tRNA-specific 2-thiouridylase MnmA.